A 185-amino-acid polypeptide reads, in one-letter code: Adenine phosphoribosyltransferase (185 aa).

The protein belongs to the purine/pyrimidine phosphoribosyltransferase family.

Its subcellular location is the cytoplasm. The catalysed reaction is AMP + diphosphate = 5-phospho-alpha-D-ribose 1-diphosphate + adenine. It participates in purine metabolism; AMP biosynthesis via salvage pathway; AMP from adenine: step 1/1. Catalyzes a salvage reaction resulting in the formation of AMP, that is energically less costly than de novo synthesis. The chain is Adenine phosphoribosyltransferase (aprt-1) from Caenorhabditis elegans.